Consider the following 212-residue polypeptide: External core antigen (212 aa).

The signal sequence occupies residues 1-19 (MQLFHLCLIIFCSCPTVQA). Residues 25 to 27 (GWL) are HBEAG. Residues 165 to 212 (NAPILSTLPETTVVRQRGRAPRRRTPSPRRRRSQSPRRRRSQSPASQC) form a disordered region. Positions 180–205 (QRGRAPRRRTPSPRRRRSQSPRRRRS) are enriched in basic residues. The stretch at 184 to 190 (APRRRTP) is one 1; half-length repeat. Positions 184 to 206 (APRRRTPSPRRRRSQSPRRRRSQ) are 3 X 8 AA repeats of S-P-R-R-R-R-S-Q. Residues 184 to 212 (APRRRTPSPRRRRSQSPRRRRSQSPASQC) constitute a propeptide that is removed on maturation. 2 consecutive repeat copies span residues 191-198 (SPRRRRSQ) and 199-206 (SPRRRRSQ).

This sequence belongs to the orthohepadnavirus precore antigen family. As to quaternary structure, homodimerizes. Post-translationally, phosphorylated. In terms of processing, cleaved by host furin.

It is found in the secreted. Its subcellular location is the host nucleus. In terms of biological role, may regulate immune response to the intracellular capsid in acting as a T-cell tolerogen, by having an immunoregulatory effect which prevents destruction of infected cells by cytotoxic T-cells. This immune regulation may predispose to chronicity during perinatal infections and prevent severe liver injury during adult infections. This Hepatitis B virus genotype H subtype adw4 (isolate Nicaragua/2928Nic/1997) (HBV-H) protein is External core antigen.